Here is a 225-residue protein sequence, read N- to C-terminus: UPF0758 protein BAV2405 (225 aa).

The 123-residue stretch at 103–225 folds into the MPN domain; the sequence is AMKHPEEVRR…ALSMAERGLI (123 aa). Positions 174, 176, and 187 each coordinate Zn(2+). The short motif at 174 to 187 is the JAMM motif element; it reads HNHPSGNPQPSAAD.

The protein belongs to the UPF0758 family.

The polypeptide is UPF0758 protein BAV2405 (Bordetella avium (strain 197N)).